The chain runs to 210 residues: Redox-sensing transcriptional repressor Rex (210 aa).

Residues 17 to 56 (KYHRYLGDLLDRDIQRISSKELSDIIGFTASQIRQDLNNF) constitute a DNA-binding region (H-T-H motif). 91 to 96 (GAGNLG) is an NAD(+) binding site.

This sequence belongs to the transcriptional regulatory Rex family. Homodimer.

It is found in the cytoplasm. In terms of biological role, modulates transcription in response to changes in cellular NADH/NAD(+) redox state. The sequence is that of Redox-sensing transcriptional repressor Rex from Clostridioides difficile (strain 630) (Peptoclostridium difficile).